Reading from the N-terminus, the 91-residue chain is MASGSSKAVIKNADMSEEMQADAVDCATQALEKYNIEKDIAAYIKKEFDRKHNPTWHCIVGRNFGSYVTHETKHFIYFYLGQVAILLFKSG.

This sequence belongs to the dynein light chain family. Consists of at least 3 heavy chains (alpha, beta and gamma), 2 intermediate chains and 8 light chains.

It is found in the cytoplasm. The protein localises to the cytoskeleton. The protein resides in the flagellum axoneme. This Chlamydomonas reinhardtii (Chlamydomonas smithii) protein is Dynein 8 kDa light chain, flagellar outer arm.